Reading from the N-terminus, the 305-residue chain is Tetraspanin-12 (305 aa).

Topologically, residues 1–12 are cytoplasmic; it reads MAREDSVKCLRC. 2 S-palmitoyl cysteine lipidation sites follow: Cys-9 and Cys-12. The helical transmembrane segment at 13 to 33 threads the bilayer; sequence LLYALNLLFWLMSISVLAVSA. The Extracellular segment spans residues 34-59; sequence WMRDYLNNVLTLTAETRVEEAVILTY. Residues 60 to 80 traverse the membrane as a helical segment; the sequence is FPVVHPVMIAVCCFLIIVGML. The Cytoplasmic segment spans residues 81–89; sequence GYCGTVKRN. The S-palmitoyl cysteine moiety is linked to residue Cys-83. A helical membrane pass occupies residues 90 to 110; that stretch reads LLLLAWYFGTLLVIFCVELAC. The Extracellular portion of the chain corresponds to 111 to 224; it reads GVWTYEQEVM…RGTKQLQVLR (114 aa). Residues 225–245 form a helical membrane-spanning segment; that stretch reads FLGISIGVTQILAMILTITLL. Over 246–305 the chain is Cytoplasmic; the sequence is WALYYDRREPGTDQMLSLKNDTSQHLSCHSVELLKPSLSRIFEHTSMANSFNTHFEMEEL.

The protein belongs to the tetraspanin (TM4SF) family. As to quaternary structure, interacts (when palmitoylated) with ADAM10. Interacts with MMP14/MT1-MMP. Component of a complex, at least composed of TSPAN12, FZD4 and norrin (NDP). Palmitoylated; required for interaction with ADAM10. As to expression, expressed in the neonatal retinal vasculature but not other retinal tissues. Also detected in the neonatal meningeal vasculature and in nonvascular cell types, such as the smooth muscle cells in the neonatal intestine.

Its subcellular location is the cell membrane. Regulator of cell surface receptor signal transduction. Acts as a regulator of membrane proteinases such as ADAM10 and MMP14/MT1-MMP. Activates ADAM10-dependent cleavage activity of amyloid precursor protein (APP). Activates MMP14/MT1-MMP-dependent cleavage activity. Plays a central role in retinal vascularization by regulating norrin (NDP) signal transduction. Acts in concert with norrin (NDP) to promote FZD4 multimerization and subsequent activation of FZD4, leading to promote accumulation of beta-catenin (CTNNB1) and stimulate LEF/TCF-mediated transcriptional programs. Suprisingly, it only activate the norrin (NDP)-dependent activation of FZD4, while it does not activate the Wnt-dependent activation of FZD4, suggesting the existence of a Wnt-independent signaling that also promote accumulation the beta-catenin (CTNNB1). In Mus musculus (Mouse), this protein is Tetraspanin-12 (Tspan12).